A 261-amino-acid polypeptide reads, in one-letter code: Hemin import ATP-binding protein HmuV (261 aa).

In terms of domain architecture, ABC transporter spans 8–243; that stretch reads IRVTDLSYSV…ESIRTAYGHE (236 aa). Position 40-47 (40-47) interacts with ATP; it reads GRNGAGKS.

This sequence belongs to the ABC transporter superfamily. Heme (hemin) importer (TC 3.A.1.14.5) family. As to quaternary structure, the complex is composed of two ATP-binding proteins (HmuV), two transmembrane proteins (HmuU) and a solute-binding protein (HmuT).

The protein resides in the cell membrane. In terms of biological role, part of the ABC transporter complex HmuTUV involved in hemin import. Responsible for energy coupling to the transport system. This chain is Hemin import ATP-binding protein HmuV, found in Deinococcus radiodurans (strain ATCC 13939 / DSM 20539 / JCM 16871 / CCUG 27074 / LMG 4051 / NBRC 15346 / NCIMB 9279 / VKM B-1422 / R1).